The primary structure comprises 888 residues: Patched domain-containing protein 1 (888 aa).

The helical transmembrane segment at 20–40 (FIASHPVFFASAPVLISILLG) threads the bilayer. 3 N-linked (GlcNAc...) asparagine glycosylation sites follow: Asn77, Asn133, and Asn167. Positions 268 to 427 (SERYLVTSLI…LSFYGSSLVF (160 aa)) constitute an SSD domain. A run of 2 helical transmembrane segments spans residues 273 to 293 (VTSL…QDCV) and 298 to 318 (WLGL…AGII). Residues Asn319 and Asn326 are each glycosylated (N-linked (GlcNAc...) asparagine). Transmembrane regions (helical) follow at residues 328–348 (TFLG…FEML), 373–393 (LSFS…ASPF), 407–427 (CIAI…SLVF), and 502–522 (PFVV…YLQV). 3 N-linked (GlcNAc...) asparagine glycosylation sites follow: Asn568, Asn599, and Asn608. A run of 2 helical transmembrane segments spans residues 707–727 (ALFL…NVWI) and 738–758 (VIGF…LCLI). Asn762 is a glycosylation site (N-linked (GlcNAc...) asparagine). Residues 795-815 (GVAILQSYLCYIVGLIPLAAV) form a helical membrane-spanning segment. Asn818 is a glycosylation site (N-linked (GlcNAc...) asparagine). The helical transmembrane segment at 826-846 (CLFLIAFVTFFHCFAILPVIL) threads the bilayer.

It belongs to the patched family. In terms of tissue distribution, widely expressed, including in various regions of the brain with highest expression in the gray and white cerebellum, followed by the cerebellar vermis and the pituitary gland.

The protein resides in the cell membrane. The protein localises to the cell projection. It localises to the dendritic spine. Functionally, required for the development and function of the thalamic reticular nucleus (TRN), a part of the thalamus that is critical for thalamocortical transmission, generation of sleep rhythms, sensorimotor processing and attention. Can bind cholesterol in vitro. The sequence is that of Patched domain-containing protein 1 from Homo sapiens (Human).